Reading from the N-terminus, the 639-residue chain is 3D-(3,5/4)-trihydroxycyclohexane-1,2-dione hydrolase (639 aa).

Glu-62 contacts thiamine diphosphate. The segment at 438-518 (SLPGDLQRMW…INILLFDNCG (81 aa)) is thiamine pyrophosphate binding. Asp-489 and Asn-516 together coordinate Mg(2+).

Belongs to the TPP enzyme family. Mg(2+) is required as a cofactor. Requires thiamine diphosphate as cofactor.

It carries out the reaction 3D-3,5/4-trihydroxycyclohexane-1,2-dione + H2O = 5-deoxy-D-glucuronate + H(+). The protein operates within polyol metabolism; myo-inositol degradation into acetyl-CoA; acetyl-CoA from myo-inositol: step 3/7. Functionally, involved in the cleavage of the C1-C2 bond of 3D-(3,5/4)-trihydroxycyclohexane-1,2-dione (THcHDO) to yield 5-deoxy-glucuronate (5DG). The chain is 3D-(3,5/4)-trihydroxycyclohexane-1,2-dione hydrolase from Clostridium perfringens (strain ATCC 13124 / DSM 756 / JCM 1290 / NCIMB 6125 / NCTC 8237 / Type A).